The chain runs to 359 residues: Lipopolysaccharide 1,6-galactosyltransferase (359 aa).

UDP-binding residues include Gln-244 and Glu-276.

It belongs to the glycosyltransferase group 1 family. Glycosyltransferase 4 subfamily.

It carries out the reaction alpha-D-Glc-(1-&gt;3)-[L-alpha-D-Hep-(1-&gt;7)]-4-O-PO3(2-)-L-alpha-D-Hep-(1-&gt;3)-4-O-PO3(2-)-L-alpha-D-Hep-(1-&gt;5)-[alpha-Kdo-(2-&gt;4)]-alpha-Kdo-(2-&gt;6)-lipid A + UDP-alpha-D-galactose = alpha-D-Gal-(1-&gt;6)-alpha-D-Glc-(1-&gt;3)-[L-alpha-D-Hep-(1-&gt;7)]-4-O-PO3(2-)-L-alpha-D-Hep-(1-&gt;3)-4-O-PO3(2-)-L-alpha-D-Hep-(1-&gt;5)-[alpha-Kdo-(2-&gt;4)]-alpha-Kdo-(2-&gt;6)-lipid A + UDP + H(+). The protein operates within bacterial outer membrane biogenesis; LPS core biosynthesis. In terms of biological role, galactosyltransferase involved in the biosynthesis of the core oligosaccharide region of lipopolysaccharide (LPS). Catalyzes the addition of galactose from UDP-galactose to the first glucose residue of the LPS outer core. This chain is Lipopolysaccharide 1,6-galactosyltransferase, found in Salmonella typhimurium (strain LT2 / SGSC1412 / ATCC 700720).